The following is a 186-amino-acid chain: Probable peptidoglycan L,D-endopeptidase MepK (186 aa).

The signal sequence occupies residues 1–30 (MNYVDQNKRKWLSLGGIALGISILPNSVLA). Residues H134, D141, and H174 each contribute to the Zn(2+) site.

The protein belongs to the peptidase M15 family. Zn(2+) serves as cofactor.

Its pathway is cell wall biogenesis; cell wall polysaccharide biosynthesis. L,D-endopeptidase that cleaves meso-diaminopimelic acid (mDAP)-mDAP cross-links in peptidoglycan. It works in conjunction with other elongation-specific D,D-endopeptidases to make space for efficient incorporation of nascent peptidoglycan strands into the sacculus and thus enable cell wall expansion. The polypeptide is Probable peptidoglycan L,D-endopeptidase MepK (Haemophilus influenzae (strain ATCC 51907 / DSM 11121 / KW20 / Rd)).